A 120-amino-acid polypeptide reads, in one-letter code: UPF0231 protein YE0706 (120 aa).

Belongs to the UPF0231 family.

This Yersinia enterocolitica serotype O:8 / biotype 1B (strain NCTC 13174 / 8081) protein is UPF0231 protein YE0706.